The following is a 523-amino-acid chain: Tryptamine 5-hydroxylase (523 aa).

Residues 5–25 form a helical membrane-spanning segment; that stretch reads MASTMSLALLVLSAAYVLVAL. C453 serves as a coordination point for heme.

The protein belongs to the cytochrome P450 family. Heme serves as cofactor.

The protein localises to the endoplasmic reticulum membrane. The catalysed reaction is tryptamine + reduced [NADPH--hemoprotein reductase] + O2 = serotonin + oxidized [NADPH--hemoprotein reductase] + H2O + H(+). Its function is as follows. Involved in serotonin biosynthesis. Catalyzes the conversion of tryptamine to serotonin. Accumulation of serotonin may play a role in innate immunity. This chain is Tryptamine 5-hydroxylase, found in Oryza sativa subsp. japonica (Rice).